The following is a 485-amino-acid chain: Glutamyl-tRNA(Gln) amidotransferase subunit A (485 aa).

Catalysis depends on charge relay system residues Lys78 and Ser153. Ser177 (acyl-ester intermediate) is an active-site residue.

The protein belongs to the amidase family. GatA subfamily. As to quaternary structure, heterotrimer of A, B and C subunits.

It catalyses the reaction L-glutamyl-tRNA(Gln) + L-glutamine + ATP + H2O = L-glutaminyl-tRNA(Gln) + L-glutamate + ADP + phosphate + H(+). Allows the formation of correctly charged Gln-tRNA(Gln) through the transamidation of misacylated Glu-tRNA(Gln) in organisms which lack glutaminyl-tRNA synthetase. The reaction takes place in the presence of glutamine and ATP through an activated gamma-phospho-Glu-tRNA(Gln). The protein is Glutamyl-tRNA(Gln) amidotransferase subunit A of Bacillus cereus (strain Q1).